The following is a 310-amino-acid chain: Porphobilinogen deaminase (310 aa).

C242 is subject to S-(dipyrrolylmethanemethyl)cysteine.

This sequence belongs to the HMBS family. Monomer. Dipyrromethane is required as a cofactor.

It catalyses the reaction 4 porphobilinogen + H2O = hydroxymethylbilane + 4 NH4(+). It participates in porphyrin-containing compound metabolism; protoporphyrin-IX biosynthesis; coproporphyrinogen-III from 5-aminolevulinate: step 2/4. In terms of biological role, tetrapolymerization of the monopyrrole PBG into the hydroxymethylbilane pre-uroporphyrinogen in several discrete steps. The protein is Porphobilinogen deaminase of Shewanella sp. (strain ANA-3).